The primary structure comprises 299 residues: Elongation factor Ts (299 aa).

The involved in Mg(2+) ion dislocation from EF-Tu stretch occupies residues 82 to 85; sequence TDFV.

This sequence belongs to the EF-Ts family.

The protein localises to the cytoplasm. Its function is as follows. Associates with the EF-Tu.GDP complex and induces the exchange of GDP to GTP. It remains bound to the aminoacyl-tRNA.EF-Tu.GTP complex up to the GTP hydrolysis stage on the ribosome. The protein is Elongation factor Ts of Dechloromonas aromatica (strain RCB).